Consider the following 36-residue polypeptide: Termicin (36 aa).

3 disulfides stabilise this stretch: C2-C24, C7-C29, and C11-C31. G36 carries the glycine amide modification.

As to expression, expressed in salivary glands and hemocytes.

Its subcellular location is the secreted. In terms of biological role, weak activity against Gram-positive bacteria B.megaterium, S.pyogenes and M.luteus, strong activity against yeasts C.albicans, C.neoformans and S.cerevisiae and filamentous fungi F.oxysporum, F.culmorum, N.crassa and N.hematococca. Less active against filamentous fungus T.viride. Inactive against Gram-positive bacteria A.viridans and S.aureus, filamentous fungi A.fumigatus and B.bassiana and yeast C.glabrata. The chain is Termicin from Pseudacanthotermes spiniger.